The sequence spans 295 residues: CRISPR-associated endonuclease Cas1 2 (295 aa).

3 residues coordinate Mn(2+): Glu155, His215, and Glu230.

It belongs to the CRISPR-associated endonuclease Cas1 family. Homodimer, forms a heterotetramer with a Cas2 homodimer. Mg(2+) serves as cofactor. The cofactor is Mn(2+).

Its function is as follows. CRISPR (clustered regularly interspaced short palindromic repeat), is an adaptive immune system that provides protection against mobile genetic elements (viruses, transposable elements and conjugative plasmids). CRISPR clusters contain spacers, sequences complementary to antecedent mobile elements, and target invading nucleic acids. CRISPR clusters are transcribed and processed into CRISPR RNA (crRNA). Acts as a dsDNA endonuclease. Involved in the integration of spacer DNA into the CRISPR cassette. In Pyrobaculum aerophilum (strain ATCC 51768 / DSM 7523 / JCM 9630 / CIP 104966 / NBRC 100827 / IM2), this protein is CRISPR-associated endonuclease Cas1 2.